A 763-amino-acid chain; its full sequence is Phosphoglycerol transferase I (763 aa).

4 helical membrane-spanning segments follow: residues 1 to 21 (MSEL…AWKA), 26 to 46 (WWFA…ITLY), 77 to 97 (ILPG…LGWI), and 108 to 128 (VGYS…SPAF).

Belongs to the OpgB family.

The protein resides in the cell inner membrane. It carries out the reaction a phosphatidylglycerol + a membrane-derived-oligosaccharide D-glucose = a 1,2-diacyl-sn-glycerol + a membrane-derived-oligosaccharide 6-(glycerophospho)-D-glucose.. It functions in the pathway glycan metabolism; osmoregulated periplasmic glucan (OPG) biosynthesis. In terms of biological role, transfers a phosphoglycerol residue from phosphatidylglycerol to the membrane-bound nascent glucan backbones. The protein is Phosphoglycerol transferase I of Salmonella paratyphi B (strain ATCC BAA-1250 / SPB7).